A 940-amino-acid chain; its full sequence is Isoleucine--tRNA ligase (940 aa).

The 'HIGH' region signature appears at 58-68; the sequence is PYANGSIHIGH. Glutamate 563 is an L-isoleucyl-5'-AMP binding site. The 'KMSKS' region signature appears at 604–608; it reads KMSKS. Lysine 607 contributes to the ATP binding site. Zn(2+) contacts are provided by cysteine 902, cysteine 905, cysteine 922, and cysteine 925.

This sequence belongs to the class-I aminoacyl-tRNA synthetase family. IleS type 1 subfamily. As to quaternary structure, monomer. Zn(2+) is required as a cofactor.

It is found in the cytoplasm. It carries out the reaction tRNA(Ile) + L-isoleucine + ATP = L-isoleucyl-tRNA(Ile) + AMP + diphosphate. In terms of biological role, catalyzes the attachment of isoleucine to tRNA(Ile). As IleRS can inadvertently accommodate and process structurally similar amino acids such as valine, to avoid such errors it has two additional distinct tRNA(Ile)-dependent editing activities. One activity is designated as 'pretransfer' editing and involves the hydrolysis of activated Val-AMP. The other activity is designated 'posttransfer' editing and involves deacylation of mischarged Val-tRNA(Ile). The protein is Isoleucine--tRNA ligase of Marinomonas sp. (strain MWYL1).